Here is a 378-residue protein sequence, read N- to C-terminus: Acetylornithine deacetylase (378 aa).

Residue H76 coordinates Zn(2+). The active site involves D78. Zn(2+) is bound at residue D108. Residue E140 is part of the active site. Residues E141, E165, and H351 each contribute to the Zn(2+) site.

This sequence belongs to the peptidase M20A family. ArgE subfamily. Homodimer. Requires Zn(2+) as cofactor. Co(2+) serves as cofactor. The cofactor is glutathione.

It is found in the cytoplasm. It catalyses the reaction N(2)-acetyl-L-ornithine + H2O = L-ornithine + acetate. The protein operates within amino-acid biosynthesis; L-arginine biosynthesis; L-ornithine from N(2)-acetyl-L-ornithine (linear): step 1/1. Its function is as follows. Catalyzes the hydrolysis of the amide bond of N(2)-acetylated L-amino acids. Cleaves the acetyl group from N-acetyl-L-ornithine to form L-ornithine, an intermediate in L-arginine biosynthesis pathway, and a branchpoint in the synthesis of polyamines. In Vibrio parahaemolyticus serotype O3:K6 (strain RIMD 2210633), this protein is Acetylornithine deacetylase.